Reading from the N-terminus, the 260-residue chain is 5-oxoprolinase subunit A (260 aa).

This sequence belongs to the LamB/PxpA family. Forms a complex composed of PxpA, PxpB and PxpC.

It catalyses the reaction 5-oxo-L-proline + ATP + 2 H2O = L-glutamate + ADP + phosphate + H(+). Functionally, catalyzes the cleavage of 5-oxoproline to form L-glutamate coupled to the hydrolysis of ATP to ADP and inorganic phosphate. The sequence is that of 5-oxoprolinase subunit A from Methylococcus capsulatus (strain ATCC 33009 / NCIMB 11132 / Bath).